We begin with the raw amino-acid sequence, 318 residues long: Homoserine kinase (318 aa).

Residue 97–107 participates in ATP binding; that stretch reads PIGSGLGSSAC.

The protein belongs to the GHMP kinase family. Homoserine kinase subfamily.

The protein localises to the cytoplasm. The enzyme catalyses L-homoserine + ATP = O-phospho-L-homoserine + ADP + H(+). It participates in amino-acid biosynthesis; L-threonine biosynthesis; L-threonine from L-aspartate: step 4/5. Functionally, catalyzes the ATP-dependent phosphorylation of L-homoserine to L-homoserine phosphate. This Vibrio atlanticus (strain LGP32) (Vibrio splendidus (strain Mel32)) protein is Homoserine kinase.